We begin with the raw amino-acid sequence, 585 residues long: MGSLKDELLKGIWHAFTALDLDHSGKVSKSQLKVLSHNLCTVLKVPHDPVALEEHFRDDDEGPVSNQGYMPYLNKFILEKVQDNFDKIEFNRMCWTLCVKKNLTKNPLFITEEDAFKIWVIFNFLSEDKYPLIIVPEEIEYLLKKLTEAMGVSWQQEQFENYKINFDDSKDGLSAWELIELVGNGQFSKGMDRQTVSMAINEVFNELILDVLKQGYMIKKGHRRKNWTERWFVLKPHIISYYVSEDLKDKKGDILLDENCCVESLPDKDGKKCLFLIKCFDKTFEISASDKKKKQEWIQAIHSTIHLLKLGSPPPHKEARQRRKELRKKLLAEQEELERQMKELQIANENKQQELEAVRKKLEEAASRAAEEEKKRLQTQVELQARFSTELEREKLIRQQMEEQVAQKSSELEQYLQRVRELEDMYLKLQEALEDERQARQDEETVRKLQARLLEEESSKRAELEKWHLEQQQAIQTTEAEKQELENQRVIKEQALQEALEQLQQLELERKQALEQYEGVKKKLEMAAKMTKSWKDKVAHHEGLIRLIEPGSKNAHLITNWGPAAFTQAELEERQKSWKEKKTTE.

In terms of domain architecture, PH spans 210 to 306 (DVLKQGYMIK…WIQAIHSTIH (97 aa)). The stretch at 316-532 (HKEARQRRKE…KLEMAAKMTK (217 aa)) forms a coiled coil.

The SWAP complex consists of NPM1, NCL, PARP1 and SWAP70. In terms of processing, tyrosine-phosphorylated.

Its subcellular location is the cytoplasm. The protein resides in the cell membrane. It localises to the nucleus. It is found in the cell projection. The protein localises to the lamellipodium. In terms of biological role, phosphatidylinositol 3,4,5-trisphosphate-dependent guanine nucleotide exchange factor (GEF) which, independently of RAS, transduces signals from tyrosine kinase receptors to RAC. It also mediates signaling of membrane ruffling. Regulates the actin cytoskeleton as an effector or adapter protein in response to agonist stimulated phosphatidylinositol (3,4)-bisphosphate production and cell protrusion. This is Switch-associated protein 70 (SWAP70) from Bos taurus (Bovine).